Reading from the N-terminus, the 143-residue chain is Nucleoside diphosphate kinase (143 aa).

Positions 11, 59, 87, 93, 104, and 114 each coordinate ATP. Residue histidine 117 is the Pros-phosphohistidine intermediate of the active site.

It belongs to the NDK family. Homotetramer. The cofactor is Mg(2+).

Its subcellular location is the cytoplasm. The catalysed reaction is a 2'-deoxyribonucleoside 5'-diphosphate + ATP = a 2'-deoxyribonucleoside 5'-triphosphate + ADP. The enzyme catalyses a ribonucleoside 5'-diphosphate + ATP = a ribonucleoside 5'-triphosphate + ADP. Functionally, major role in the synthesis of nucleoside triphosphates other than ATP. The ATP gamma phosphate is transferred to the NDP beta phosphate via a ping-pong mechanism, using a phosphorylated active-site intermediate. In Clostridium perfringens (strain SM101 / Type A), this protein is Nucleoside diphosphate kinase.